The primary structure comprises 426 residues: DNA polymerase processivity factor component OPG148 (426 aa).

The protein belongs to the orthopoxvirus OPG148 family. Interacts with the DNA polymerase catalytic subunit OPG071. Interacts with UDG/OPG116. Component of the uracil-DNA glycosylase(UDG)-OPG148-polymerase complex; OPG148 and UDG form a heterodimeric processivity factor that associates with OPG071 to form the processive polymerase holoenzyme. Interacts with OPG117.

Functionally, plays an essential role in viral DNA replication by acting as the polymerase processivity factor together with protein OPG116. Serves as a bridge which links the DNA polymerase OPG071 and the uracil DNA glycosylase. The chain is DNA polymerase processivity factor component OPG148 (OPG148) from Vaccinia virus (strain Copenhagen) (VACV).